The sequence spans 501 residues: Putative ribose/galactose/methyl galactoside import ATP-binding protein 1 (501 aa).

ABC transporter domains are found at residues V5–Q237 and V249–S492. Position 37-44 (G37–S44) interacts with ATP.

It belongs to the ABC transporter superfamily. Carbohydrate importer 2 (CUT2) (TC 3.A.1.2) family.

It is found in the cell inner membrane. It catalyses the reaction D-ribose(out) + ATP + H2O = D-ribose(in) + ADP + phosphate + H(+). The enzyme catalyses D-galactose(out) + ATP + H2O = D-galactose(in) + ADP + phosphate + H(+). In terms of biological role, part of an ABC transporter complex involved in carbohydrate import. Could be involved in ribose, galactose and/or methyl galactoside import. Responsible for energy coupling to the transport system. The chain is Putative ribose/galactose/methyl galactoside import ATP-binding protein 1 from Rhizobium meliloti (strain 1021) (Ensifer meliloti).